We begin with the raw amino-acid sequence, 353 residues long: Protein RecA (353 aa).

68 to 75 (GPESSGKT) contributes to the ATP binding site.

Belongs to the RecA family.

It is found in the cytoplasm. Can catalyze the hydrolysis of ATP in the presence of single-stranded DNA, the ATP-dependent uptake of single-stranded DNA by duplex DNA, and the ATP-dependent hybridization of homologous single-stranded DNAs. It interacts with LexA causing its activation and leading to its autocatalytic cleavage. This Roseiflexus sp. (strain RS-1) protein is Protein RecA.